A 563-amino-acid polypeptide reads, in one-letter code: GTPase Obg (563 aa).

Residues 2–168 (SDFVDRVTVH…RDVILELKSI (167 aa)) enclose the Obg domain. An OBG-type G domain is found at 169 to 349 (ADVALVGFPS…LNFALSALVH (181 aa)). GTP contacts are provided by residues 175 to 182 (GFPSAGKS), 200 to 204 (FTTLV), 221 to 224 (DVPG), 301 to 304 (NKID), and 330 to 332 (STA). Positions 182 and 202 each coordinate Mg(2+). In terms of domain architecture, OCT spans 383-469 (DEGGSALEFT…ARMVEFDWDP (87 aa)). Disordered stretches follow at residues 478-509 (LDGS…ERRA) and 528-563 (ERKA…ETEE). Basic and acidic residues predominate over residues 486 to 509 (RGKDLRLEEQDPRTHRRSNAERRA).

Belongs to the TRAFAC class OBG-HflX-like GTPase superfamily. OBG GTPase family. Monomer. Requires Mg(2+) as cofactor.

It is found in the cytoplasm. In terms of biological role, an essential GTPase which binds GTP, GDP and possibly (p)ppGpp with moderate affinity, with high nucleotide exchange rates and a fairly low GTP hydrolysis rate. Plays a role in control of the cell cycle, stress response, ribosome biogenesis and in those bacteria that undergo differentiation, in morphogenesis control. The protein is GTPase Obg of Bifidobacterium longum subsp. infantis (strain ATCC 15697 / DSM 20088 / JCM 1222 / NCTC 11817 / S12).